Reading from the N-terminus, the 220-residue chain is Translation initiation factor IF-3 (220 aa).

A disordered region spans residues threonine 182 to glycine 220. Residues valine 185–alanine 194 show a composition bias toward basic and acidic residues.

Belongs to the IF-3 family. Monomer.

The protein resides in the cytoplasm. IF-3 binds to the 30S ribosomal subunit and shifts the equilibrium between 70S ribosomes and their 50S and 30S subunits in favor of the free subunits, thus enhancing the availability of 30S subunits on which protein synthesis initiation begins. This Synechococcus sp. (strain WH7803) protein is Translation initiation factor IF-3.